A 180-amino-acid chain; its full sequence is Type IV major pilin protein PilE1 (180 aa).

Residues 1-7 constitute a propeptide that is removed on maturation; sequence MNTLQKG. Phe-8 is modified (N-methylphenylalanine). Residues 8-28 traverse the membrane as a helical segment; that stretch reads FTLIELMIVIAIVGILAAVAL. Residue Ser-70 is glycosylated (O-linked (GlcNAc...) serine). Cys-128 and Cys-160 are disulfide-bonded.

It belongs to the N-Me-Phe pilin family. The pili are polar flexible filaments of about 5.4 nanometers diameter and 2.5 micrometers average length; they consist of only a single polypeptide chain arranged in a helical configuration of five subunits per turn in the assembled pilus.

The protein localises to the fimbrium. Its subcellular location is the membrane. In terms of biological role, major component of the type IV pilus (T4P) that plays a role in cellular adherence, microcolony formation, resistance to neutrophil mediated killing, twitching motility as well as transformation. Mediates the attachment and the formation of bacterial microcolonies on host epithelial cells. Mechanistically, pili retractation induces host NF-kappa-B activation in infected cells, which is temporally associated with the formation of gonococcal microcolonies. The sequence is that of Type IV major pilin protein PilE1 (pilE1) from Neisseria gonorrhoeae.